We begin with the raw amino-acid sequence, 376 residues long: Protein MGF 360-7L (376 aa).

This sequence belongs to the asfivirus MGF 360 family.

In terms of biological role, plays a role in virus cell tropism, and may be required for efficient virus replication in macrophages. The polypeptide is Protein MGF 360-7L (Ornithodoros (relapsing fever ticks)).